The following is a 67-amino-acid chain: Small ribosomal subunit protein bS21 (67 aa).

The protein belongs to the bacterial ribosomal protein bS21 family.

This Acidiphilium cryptum (strain JF-5) protein is Small ribosomal subunit protein bS21.